Here is a 327-residue protein sequence, read N- to C-terminus: Zinc transport protein ZntB (327 aa).

At 1-271 the chain is on the cytoplasmic side; sequence MDVVAGKALQ…AMNRRTYTMS (271 aa). The chain crosses the membrane as a helical span at residues 272–292; that stretch reads LLAMVFLPTTFLTGLFGVNLG. Residues 293-300 are Periplasmic-facing; sequence GIPGNTDS. A helical transmembrane segment spans residues 301-321; it reads FGFATFCMMLVVLVLGVAWWL. Residues 322 to 327 are Cytoplasmic-facing; the sequence is KHSKWL.

It belongs to the CorA metal ion transporter (MIT) (TC 1.A.35) family.

Its subcellular location is the cell inner membrane. It catalyses the reaction Zn(2+)(out) + H(+)(out) = Zn(2+)(in) + H(+)(in). In terms of biological role, zinc transporter. Acts as a Zn(2+):proton symporter, which likely mediates zinc ion uptake. In Yersinia enterocolitica serotype O:8 / biotype 1B (strain NCTC 13174 / 8081), this protein is Zinc transport protein ZntB.